The following is a 425-amino-acid chain: Probable mitochondrial import inner membrane translocase subunit tin-44 (425 aa).

The stretch at 38–149 (FLNNLIDNVR…EHVEKVAEKV (112 aa)) forms a coiled coil.

Belongs to the Tim44 family. As to quaternary structure, probable component of the PAM complex at least composed of a mitochondrial HSP70 protein, GrpE, tin-44, tim-16 and tim-14/dnj-21. The complex interacts with the tim-23 component of the TIM23 complex.

It localises to the mitochondrion inner membrane. Functionally, essential component of the PAM complex, a complex required for the translocation of transit peptide-containing proteins from the inner membrane into the mitochondrial matrix in an ATP-dependent manner. Recruits mitochondrial HSP70 to drive protein translocation into the matrix using ATP as an energy source. In Caenorhabditis elegans, this protein is Probable mitochondrial import inner membrane translocase subunit tin-44.